Reading from the N-terminus, the 319-residue chain is Malate dehydrogenase (319 aa).

NAD(+)-binding positions include 10 to 15 (GAGNIG) and Asp-34. The substrate site is built by Arg-83 and Arg-89. NAD(+) contacts are provided by residues Asn-96 and 119 to 121 (ITN). 2 residues coordinate substrate: Asn-121 and Arg-152. Residue His-176 is the Proton acceptor of the active site.

It belongs to the LDH/MDH superfamily. MDH type 3 family.

It catalyses the reaction (S)-malate + NAD(+) = oxaloacetate + NADH + H(+). In terms of biological role, catalyzes the reversible oxidation of malate to oxaloacetate. This chain is Malate dehydrogenase, found in Francisella philomiragia subsp. philomiragia (strain ATCC 25017 / CCUG 19701 / FSC 153 / O#319-036).